A 90-amino-acid chain; its full sequence is UPF0223 protein lmo1058 (90 aa).

Belongs to the UPF0223 family.

This chain is UPF0223 protein lmo1058, found in Listeria monocytogenes serovar 1/2a (strain ATCC BAA-679 / EGD-e).